Reading from the N-terminus, the 403-residue chain is MPKFKRVHLVVMDSVGIGAAPDSDKFFNAGVADTESDTLGHISEKAGLEVPNMTKIGLGNIPRDTALATVPAESHPTGYVTKLEEVSLGKDTMTGHWEIMGLNITEPFDTFWDGFPEEILTKIEEFSGRKIIREANKPYSGTAVIDDFGPRQMETGELIVYTSADPVLQIAAHEDIIPLDELYRICEYARSITLERPALLGRIIARPYVGEPGNFSRTANRHDYAVSPFEATVLNKLADAGVPTYSVGKISDIFNGSGITNDMGHTKSNMHGVDVLIDTLKLSDFEEGFSFTNLVDFDAVYGHRRNIEGYRDCLQEFDARIPEIIDNMREDDLLLITADHGNDPSYAGTDHTREYVPLLAYSKAFKGSGVLPVGHFADISATVAENFGVDTAMIGESFLSQLV.

Mn(2+) is bound by residues D13, D298, H303, D339, H340, and H351.

Belongs to the phosphopentomutase family. Requires Mn(2+) as cofactor.

It is found in the cytoplasm. It catalyses the reaction 2-deoxy-alpha-D-ribose 1-phosphate = 2-deoxy-D-ribose 5-phosphate. The enzyme catalyses alpha-D-ribose 1-phosphate = D-ribose 5-phosphate. The protein operates within carbohydrate degradation; 2-deoxy-D-ribose 1-phosphate degradation; D-glyceraldehyde 3-phosphate and acetaldehyde from 2-deoxy-alpha-D-ribose 1-phosphate: step 1/2. In terms of biological role, isomerase that catalyzes the conversion of deoxy-ribose 1-phosphate (dRib-1-P) and ribose 1-phosphate (Rib-1-P) to deoxy-ribose 5-phosphate (dRib-5-P) and ribose 5-phosphate (Rib-5-P), respectively. This chain is Phosphopentomutase, found in Streptococcus suis (strain 05ZYH33).